Consider the following 557-residue polypeptide: Inositol-3-phosphate synthase 1 (557 aa).

NAD(+) is bound by residues Gly67, Gly68, Asn69, Asn70, Asp141, Ser177, Val178, Gln188, Arg191, Thr228, Ala229, Asn230, Thr231, Gly278, Ser279, Asp303, Ser306, Asn337, Asn338, Asp339, and Lys352. Ser279 is subject to Phosphoserine. A Phosphoserine modification is found at Ser357. NAD(+) is bound by residues Gly390, Asp391, Asp419, and Ser420. Residues Gly512–Ala557 form a disordered region. Residue Ser524 is modified to Phosphoserine.

This sequence belongs to the myo-inositol 1-phosphate synthase family. The cofactor is NAD(+). As to expression, in testis, it is expressed in Sertoli cells. Highly expressed in 2 types of germ cells, pachytene spermatocytes and round spermatids.

The protein localises to the cytoplasm. The catalysed reaction is D-glucose 6-phosphate = 1D-myo-inositol 3-phosphate. The protein operates within polyol metabolism; myo-inositol biosynthesis; myo-inositol from D-glucose 6-phosphate: step 1/2. Functionally, key enzyme in myo-inositol biosynthesis pathway that catalyzes the conversion of glucose 6-phosphate to 1-myo-inositol 1-phosphate in a NAD-dependent manner. Rate-limiting enzyme in the synthesis of all inositol-containing compounds. The sequence is that of Inositol-3-phosphate synthase 1 (Isyna1) from Mus musculus (Mouse).